Here is a 493-residue protein sequence, read N- to C-terminus: UDP-N-acetylmuramoyl-L-alanyl-D-glutamate--2,6-diaminopimelate ligase (493 aa).

S31 lines the UDP-N-acetyl-alpha-D-muramoyl-L-alanyl-D-glutamate pocket. 111-117 (GTNGKTT) contacts ATP. Residues N152, 153 to 154 (TT), S180, and R188 contribute to the UDP-N-acetyl-alpha-D-muramoyl-L-alanyl-D-glutamate site. The residue at position 220 (K220) is an N6-carboxylysine. Meso-2,6-diaminopimelate contacts are provided by residues R386, 410 to 413 (DNPR), G462, and E466. The Meso-diaminopimelate recognition motif signature appears at 410-413 (DNPR).

Belongs to the MurCDEF family. MurE subfamily. It depends on Mg(2+) as a cofactor. Carboxylation is probably crucial for Mg(2+) binding and, consequently, for the gamma-phosphate positioning of ATP.

The protein localises to the cytoplasm. The catalysed reaction is UDP-N-acetyl-alpha-D-muramoyl-L-alanyl-D-glutamate + meso-2,6-diaminopimelate + ATP = UDP-N-acetyl-alpha-D-muramoyl-L-alanyl-gamma-D-glutamyl-meso-2,6-diaminopimelate + ADP + phosphate + H(+). The protein operates within cell wall biogenesis; peptidoglycan biosynthesis. In terms of biological role, catalyzes the addition of meso-diaminopimelic acid to the nucleotide precursor UDP-N-acetylmuramoyl-L-alanyl-D-glutamate (UMAG) in the biosynthesis of bacterial cell-wall peptidoglycan. This Oceanobacillus iheyensis (strain DSM 14371 / CIP 107618 / JCM 11309 / KCTC 3954 / HTE831) protein is UDP-N-acetylmuramoyl-L-alanyl-D-glutamate--2,6-diaminopimelate ligase (murE1).